A 323-amino-acid polypeptide reads, in one-letter code: Extracellular endo-alpha-(1-&gt;5)-L-arabinanase 1 (323 aa).

An N-terminal signal peptide occupies residues 1-32 (MKKKKTWKRFLHFSSAALAAGLIFTSAAPAEA). D44 serves as the catalytic Proton acceptor. A substrate-binding site is contributed by D44. D107 contributes to the Ca(2+) binding site. Substrate contacts are provided by residues G125 and 160–163 (NAID). E165 contacts Ca(2+). Residue 180-182 (SFW) participates in substrate binding. E215 (proton donor) is an active-site residue. Residue D287 participates in Ca(2+) binding.

The protein belongs to the glycosyl hydrolase 43 family. Ca(2+) serves as cofactor.

Its subcellular location is the secreted. It carries out the reaction Endohydrolysis of (1-&gt;5)-alpha-arabinofuranosidic linkages in (1-&gt;5)-arabinans.. It participates in glycan metabolism; L-arabinan degradation. Functionally, involved in the degradation of arabinan and is a key enzyme in the complete degradation of the plant cell wall. Catalyzes the internal cleavage of alpha-(1-&gt;5)-L-arabinofuranosyl residues of linear 1,5-alpha-L-arabinan and of branched sugar beet arabinan. It displays no activity against heavily substituted arabinans or a range of other polysaccharides (larch wood arabinogalactan, wheat arabinoxylan and p-nitrophenyl-alpha-L-arabinofuranoside). The enzyme activity is progressively reduced as alpha-(1-&gt;5)-chains become shorter or more highly substituted. The sequence is that of Extracellular endo-alpha-(1-&gt;5)-L-arabinanase 1 (abnA) from Bacillus subtilis (strain 168).